Consider the following 967-residue polypeptide: uncharacterized protein (967 aa).

Disordered regions lie at residues 1 to 23 and 41 to 72; these read MQNA…FHDR and FTMH…DPRT. Positions 14-23 are enriched in basic and acidic residues; the sequence is KGRDVNFHDR. Residues 60–72 are compositionally biased toward polar residues; the sequence is RLSNYSSAVDPRT. Ser-86 carries the phosphoserine modification. Disordered regions lie at residues 135–259, 271–296, 380–399, 437–464, and 499–544; these read AVSE…QHLP, SVSR…SPPE, DSTT…APHK, HSYG…FVAD, and GTRF…KSLS. Polar residues predominate over residues 162–187; it reads ESSTSNNLETGNSTNTALHNVSSPLE. The span at 205–218 shows a compositional bias: basic and acidic residues; the sequence is HDLDEVISEKDTSL. The span at 221–234 shows a compositional bias: basic residues; it reads RSSRGRSSAPKRRK. The span at 278 to 294 shows a compositional bias: low complexity; sequence SPASTPRSSVSSVSSSP. The segment covering 382 to 394 has biased composition (polar residues); it reads TTEYVNTESSSKT. A compositionally biased stretch (basic residues) spans 499–508; sequence GTRFHSRSSH. Residue Ser-585 is modified to Phosphoserine. Disordered stretches follow at residues 594–665 and 681–708; these read ESNE…SVND and DHRI…ESQH. The segment covering 608–622 has biased composition (basic and acidic residues); the sequence is YDSRESTGHTIKELR. Positions 686–704 are enriched in low complexity; the sequence is ASDNQNNNNNDANALAENS. Position 728 to 736 (728 to 736) interacts with substrate; sequence PCVLDVKMG.

Belongs to the inositol phosphokinase (IPK) family.

The protein localises to the cytoplasm. This is an uncharacterized protein from Schizosaccharomyces pombe (strain 972 / ATCC 24843) (Fission yeast).